An 86-amino-acid polypeptide reads, in one-letter code: Small ribosomal subunit protein uS17 (86 aa).

The protein belongs to the universal ribosomal protein uS17 family. In terms of assembly, part of the 30S ribosomal subunit.

One of the primary rRNA binding proteins, it binds specifically to the 5'-end of 16S ribosomal RNA. This is Small ribosomal subunit protein uS17 from Helicobacter acinonychis (strain Sheeba).